A 266-amino-acid chain; its full sequence is 14-3-3 protein homolog (266 aa).

Residues 154-177 are disordered; the sequence is KQAADQAQESYQKATETAEGHSPA. Polar residues predominate over residues 158–168; that stretch reads DQAQESYQKAT.

The protein belongs to the 14-3-3 family.

This chain is 14-3-3 protein homolog, found in Neospora caninum (Coccidian parasite).